The following is a 304-amino-acid chain: GMP synthase [glutamine-hydrolyzing] subunit B (304 aa).

The 182-residue stretch at 2–183 folds into the GMPS ATP-PPase domain; sequence VKVEKFIPNA…LDLPEEICER (182 aa). 28 to 34 is an ATP binding site; sequence SGGVDSS.

Heterodimer composed of a glutamine amidotransferase subunit (A) and a GMP-binding subunit (B).

The enzyme catalyses XMP + L-glutamine + ATP + H2O = GMP + L-glutamate + AMP + diphosphate + 2 H(+). Its pathway is purine metabolism; GMP biosynthesis; GMP from XMP (L-Gln route): step 1/1. In terms of biological role, catalyzes the synthesis of GMP from XMP. This is GMP synthase [glutamine-hydrolyzing] subunit B from Methanococcoides burtonii (strain DSM 6242 / NBRC 107633 / OCM 468 / ACE-M).